The primary structure comprises 28 residues: Ribosome-inactivating protein pleuturegin (28 aa).

This sequence belongs to the ribosome-inactivating protein family.

It catalyses the reaction Endohydrolysis of the N-glycosidic bond at one specific adenosine on the 28S rRNA.. Its function is as follows. Inhibits protein synthesis in animal cells. Does not possess ribonuclease activity. This Pleurotus tuber-regium (King tuber oyster mushroom) protein is Ribosome-inactivating protein pleuturegin.